Consider the following 374-residue polypeptide: Heme A synthase (374 aa).

8 helical membrane-spanning segments follow: residues 22 to 42, 107 to 127, 135 to 155, 172 to 192, 209 to 229, 265 to 285, 306 to 326, and 327 to 347; these read VAVW…IGAI, LWGR…WVRG, PTLA…WFMV, LHLG…LGLL, AWAA…VAGI, AAVQ…VLSL, AAAT…VVWI, and PLAT…VWTL. Histidine 271 contributes to the heme binding site. Position 332 (histidine 332) interacts with heme.

It belongs to the COX15/CtaA family. Type 2 subfamily. As to quaternary structure, interacts with CtaB. The cofactor is heme b.

It is found in the cell membrane. The catalysed reaction is Fe(II)-heme o + 2 A + H2O = Fe(II)-heme a + 2 AH2. It participates in porphyrin-containing compound metabolism; heme A biosynthesis; heme A from heme O: step 1/1. Functionally, catalyzes the conversion of heme O to heme A by two successive hydroxylations of the methyl group at C8. The first hydroxylation forms heme I, the second hydroxylation results in an unstable dihydroxymethyl group, which spontaneously dehydrates, resulting in the formyl group of heme A. This chain is Heme A synthase, found in Rhodospirillum centenum (strain ATCC 51521 / SW).